The sequence spans 244 residues: Gasdermin-like protein rcd-1-2 (244 aa).

Positions 1–22 are disordered; that stretch reads MDNEEWFPLKQTHYPPPTIPSM.

It belongs to the gasdermin family. In terms of assembly, heterooligomer; the heterooligomer with rcd-1-1 forms a ring-shaped pore complex when inserted in the membrane.

Its subcellular location is the cytoplasm. It localises to the cell membrane. Gasdermin-like protein involved in heterokaryon incompatibility, a process that ensures that during spontaneous vegetative cell fusion, only compatible cells from the same colony survive (non-self-recognition). In N.crassa, the rcd-1 locus exists as 2 incompatible alleles, rcd-1-1 (AC Q7SBA0) and rcd-1-2 (this entry). During the allorecognition process, forms a heterooligomer with rcd-1-1, thereby forming a functional gasdermin-like complex that binds to membranes and forms pores, triggering cell death. Binds negatively charged phospholipids, such as cardiolipin and phosphatidylserine. Also binds to phosphoinositides, preferentially to phosphatidylinositol-3-phosphate (PtdIns-3-P), PtdIns-5-P and PtdIns-3,5-P2. The sequence is that of Gasdermin-like protein rcd-1-2 from Neurospora crassa.